The sequence spans 422 residues: Metallocarboxypeptidase A (422 aa).

The first 17 residues, 1–17 (MRSVLSLALLAANVVTA), serve as a signal peptide directing secretion. Residues 18–112 (AVVSPFDYSG…FEAYSAGYAP (95 aa)) constitute a propeptide, activation peptide. In terms of domain architecture, Peptidase M14 spans 119 to 419 (SYHSYQDHIS…AGTVAMLKAV (301 aa)). Zn(2+)-binding residues include H179 and E182. Substrate is bound by residues 179–182 (HARE), R237, and 254–255 (NR). The cysteines at positions 248 and 271 are disulfide-linked. H309 provides a ligand contact to Zn(2+). 310-311 (SY) contacts substrate. Residue E385 is the Proton donor/acceptor of the active site.

The protein belongs to the peptidase M14 family. It depends on Zn(2+) as a cofactor.

The protein resides in the secreted. Its function is as follows. Extracellular metalloprotease that contributes to pathogenicity. In Trichophyton tonsurans (Scalp ringworm fungus), this protein is Metallocarboxypeptidase A (MCPA).